A 105-amino-acid polypeptide reads, in one-letter code: Nitrogenase-stabilizing/protective protein NifW 2 (105 aa).

The protein belongs to the NifW family.

In terms of biological role, may protect the nitrogenase Fe-Mo protein from oxidative damage. The protein is Nitrogenase-stabilizing/protective protein NifW 2 (nifW2) of Trichormus variabilis (strain ATCC 29413 / PCC 7937) (Anabaena variabilis).